The chain runs to 403 residues: S-adenosylmethionine synthase (403 aa).

Position 16 (His16) interacts with ATP. Asp18 serves as a coordination point for Mg(2+). Glu44 serves as a coordination point for K(+). L-methionine is bound by residues Glu57 and Gln100. The interval 100–110 (QSNDIAQGVDH) is flexible loop. ATP is bound by residues 167–169 (DAK), 238–239 (RF), Asp247, 253–254 (RK), Ala270, and Lys274. Residue Asp247 participates in L-methionine binding. Lys278 is an L-methionine binding site.

The protein belongs to the AdoMet synthase family. In terms of assembly, homotetramer; dimer of dimers. Mg(2+) is required as a cofactor. K(+) serves as cofactor.

It localises to the cytoplasm. It catalyses the reaction L-methionine + ATP + H2O = S-adenosyl-L-methionine + phosphate + diphosphate. Its pathway is amino-acid biosynthesis; S-adenosyl-L-methionine biosynthesis; S-adenosyl-L-methionine from L-methionine: step 1/1. In terms of biological role, catalyzes the formation of S-adenosylmethionine (AdoMet) from methionine and ATP. The overall synthetic reaction is composed of two sequential steps, AdoMet formation and the subsequent tripolyphosphate hydrolysis which occurs prior to release of AdoMet from the enzyme. This Verminephrobacter eiseniae (strain EF01-2) protein is S-adenosylmethionine synthase.